A 491-amino-acid polypeptide reads, in one-letter code: UDP-N-acetylmuramate--L-alanine ligase (491 aa).

ATP is bound at residue 126-132 (GTHGKTT).

This sequence belongs to the MurCDEF family.

The protein resides in the cytoplasm. The enzyme catalyses UDP-N-acetyl-alpha-D-muramate + L-alanine + ATP = UDP-N-acetyl-alpha-D-muramoyl-L-alanine + ADP + phosphate + H(+). It participates in cell wall biogenesis; peptidoglycan biosynthesis. In terms of biological role, cell wall formation. This Salmonella choleraesuis (strain SC-B67) protein is UDP-N-acetylmuramate--L-alanine ligase.